We begin with the raw amino-acid sequence, 238 residues long: tRNA (guanine-N(7)-)-methyltransferase (238 aa).

4 residues coordinate S-adenosyl-L-methionine: E68, E93, D120, and D143. The active site involves D143. Substrate is bound by residues K147, D179, and 216–219 (TKFE).

Belongs to the class I-like SAM-binding methyltransferase superfamily. TrmB family.

It catalyses the reaction guanosine(46) in tRNA + S-adenosyl-L-methionine = N(7)-methylguanosine(46) in tRNA + S-adenosyl-L-homocysteine. Its pathway is tRNA modification; N(7)-methylguanine-tRNA biosynthesis. Catalyzes the formation of N(7)-methylguanine at position 46 (m7G46) in tRNA. This Shewanella denitrificans (strain OS217 / ATCC BAA-1090 / DSM 15013) protein is tRNA (guanine-N(7)-)-methyltransferase.